Reading from the N-terminus, the 964-residue chain is MADFMDIEPSSHSAKASQYESSAPASSSLGNSHPNESLDYYIYDYFVKHNFEEAAQAFLRESKIQIPKSSSSTAFSPSNNNAPSPFPPKNSSLASPSKISESISGDRLYNHMSSAPSPNKKEETNVVHANEDISLDKRQSFGSSSLPPSEVSINVPEGFLVEWFNIFWDVFSARVSRVNSTPIQLYDPSTQRQMARPMSNLQASQPVPSSTFSRSAVVPNPSLPLNPSVLQGQVMNNPTIPKGTPSTSIEGAKTSIPPSHAMQNPHNSFPASADRLQKNHPVQSSNFNPYTPAPSITVPPNYIPNTAMMGPSYSSFGDTDPRTYPAGMGPNPTAARNGFYPPTPAQIHQLKAQQQHLQRQSKQMSEPAPINMKSNKDQQLQYVDFRGVGSGADLQKQQWNKSTSAEGLQPNGLVMRNFGDVRHQKLPTSSPPSQHPPVGQIPSQYLPYQAGLKVPGNTPIPVKQVGGMPLQSPLPVSMKPSADDHSRATPTRSVEAPTLPSYAPRHPTQANGSRYMNPSTSRMTPQSPYMQNYYRPHAQMQDQNNMMSYMLSQQKAMEIAKSREMAIQRNTQTLSSGNQPPQQSGPNPNEFSMSMDPANMQQGNHALSDYHMQLMLLEEQNKKRLMMARQEQGTGSLSPQSYMNSRYSVDVGKEHMSMIPNQTAPMIQPNVPVSANSPAQANTPAADSTKSGTIQPTNRNGEGLSYSPHQQFSPSAPQAEKLSRSMSPFVSQQQQLNQPVSNKPDGLTQNKEVTGMPLNKEELTNPAFPQSRTSWMMPQSFDTSSLNAPGAKDSSSFSSLHAQPGKSGIATMGVADNTIRTTERSTFSEIMKDSPSAHASPGAKTSPNASRAPEPTGGTNSISQDTTQSLQMQSNSVNSSSMVDASKSKEKSGGDTSALDSNAKNEPTAAKPISKLEDDALFNDSAGNAFGFSSKTDSNVEMLNDFDFESFLNDAGADSASVYY.

Positions 1 to 32 are disordered; sequence MADFMDIEPSSHSAKASQYESSAPASSSLGNS. Over residues 16-32 the composition is skewed to low complexity; it reads ASQYESSAPASSSLGNS. The 33-residue stretch at 34–66 folds into the LisH domain; sequence PNESLDYYIYDYFVKHNFEEAAQAFLRESKIQI. Low complexity predominate over residues 69-83; the sequence is SSSSTAFSPSNNNAP. Disordered stretches follow at residues 69 to 125, 241 to 273, 476 to 523, 572 to 596, and 664 to 914; these read SSSS…EETN, PKGT…PASA, VSMK…TSRM, QTLS…MSMD, and APMI…KPIS. Polar residues-rich tracts occupy residues 93–103, 261–270, and 508–523; these read LASPSKISESI, AMQNPHNSFP, and TQAN…TSRM. Positions 575-589 are enriched in low complexity; sequence SSGNQPPQQSGPNPN. Polar residues-rich tracts occupy residues 664-700, 707-716, 724-752, 767-801, 818-828, and 857-868; these read APMI…TNRN, SPHQQFSPSA, RSMS…QNKE, AFPQ…SSLH, TIRTTERSTFS, and GGTNSISQDTTQ. Low complexity predominate over residues 869–885; sequence SLQMQSNSVNSSSMVDA. The span at 894-905 shows a compositional bias: polar residues; sequence GDTSALDSNAKN.

It belongs to the FLO8 family.

The protein resides in the cytoplasm. It localises to the nucleus. Functionally, probable transcriptional regulator involved in cell adhesion. This Schizosaccharomyces pombe (strain 972 / ATCC 24843) (Fission yeast) protein is Adhesion defective protein 3 (adn3).